Consider the following 227-residue polypeptide: PKHD-type hydroxylase Reut_B4660 (227 aa).

Residues 78–178 enclose the Fe2OG dioxygenase domain; the sequence is KVFPPLFNRY…RVSSFFWIQS (101 aa). Fe cation-binding residues include H96, D98, and H159. Residue R169 coordinates 2-oxoglutarate.

Fe(2+) is required as a cofactor. L-ascorbate serves as cofactor.

The protein is PKHD-type hydroxylase Reut_B4660 of Cupriavidus pinatubonensis (strain JMP 134 / LMG 1197) (Cupriavidus necator (strain JMP 134)).